The chain runs to 358 residues: tRNA(Ile)-lysidine synthase (358 aa).

Position 35–40 (35–40 (SGGPDS)) interacts with ATP.

The protein belongs to the tRNA(Ile)-lysidine synthase family.

The protein localises to the cytoplasm. It catalyses the reaction cytidine(34) in tRNA(Ile2) + L-lysine + ATP = lysidine(34) in tRNA(Ile2) + AMP + diphosphate + H(+). Ligates lysine onto the cytidine present at position 34 of the AUA codon-specific tRNA(Ile) that contains the anticodon CAU, in an ATP-dependent manner. Cytidine is converted to lysidine, thus changing the amino acid specificity of the tRNA from methionine to isoleucine. This chain is tRNA(Ile)-lysidine synthase, found in Bradyrhizobium sp. (strain BTAi1 / ATCC BAA-1182).